We begin with the raw amino-acid sequence, 329 residues long: Replication factor C small subunit (329 aa).

51–58 (GPPGTGKT) is an ATP binding site.

Belongs to the activator 1 small subunits family. RfcS subfamily. As to quaternary structure, heteromultimer composed of small subunits (RfcS) and large subunits (RfcL).

Its function is as follows. Part of the RFC clamp loader complex which loads the PCNA sliding clamp onto DNA. The polypeptide is Replication factor C small subunit (Staphylothermus marinus (strain ATCC 43588 / DSM 3639 / JCM 9404 / F1)).